The primary structure comprises 60 residues: Ras-related protein Rab-2A (60 aa).

GTP is bound by residues Ser1, Cys2, and Thr19. Ser1 is a Mg(2+) binding site. The Effector region motif lies at 16–24; sequence HDLTIGVEF. Mg(2+) is bound at residue Thr19.

The protein belongs to the small GTPase superfamily. Rab family. As to quaternary structure, interacts with PRKCI. Interacts with TRIP11. Interacts (in GTP-bound form) with GARIN1B. Interacts (GTP-bound) with HOPS complex component VPS39; interaction contributes to obtaining a functional HOPS complex that promotes autophagosome-lysosome membrane fusion driven by STX17-SNAP29-VAMP8. May interact with VPS41. Mg(2+) serves as cofactor. Post-translationally, prenylated. Prenylation is required for association with cellular membranes.

The protein resides in the endoplasmic reticulum-Golgi intermediate compartment membrane. It localises to the melanosome. Its subcellular location is the endoplasmic reticulum membrane. The protein localises to the golgi apparatus membrane. It is found in the cytoplasmic vesicle. The protein resides in the secretory vesicle. It localises to the acrosome. Its subcellular location is the autophagosome membrane. The catalysed reaction is GTP + H2O = GDP + phosphate + H(+). Regulated by guanine nucleotide exchange factors (GEFs) which promote the exchange of bound GDP for free GTP, GTPase activating proteins (GAPs) which increase the GTP hydrolysis activity, and GDP dissociation inhibitors (GDIs) which inhibit the dissociation of the nucleotide from the GTPase. Its function is as follows. The small GTPases Rab are key regulators of intracellular membrane trafficking, from the formation of transport vesicles to their fusion with membranes. Rabs cycle between active GTP-bound and inactive GDP-bound states. In their active state, drive transport of vesicular carriers from donor organelles to acceptor organelles to regulate the membrane traffic that maintains organelle identity and morphology. RAB2A regulates autophagy by promoting autophagosome-lysosome fusion via recruitment of the HOPS endosomal tethering complex; this process involves autophagosomal RAB2A and lysosomal RAB39A recruitment of HOPS subcomplexes VPS39-VPS11 and VPS41-VPS16-VPS18-VPS33A, respectively, which assemble into a functional complex to mediate membrane tethering and SNAREs-driven membrane fusion. Required for protein transport from the endoplasmic reticulum to the Golgi complex. Regulates the compacted morphology of the Golgi. Together with RAB2B, redundantly required for efficient autophagic flux. The protein is Ras-related protein Rab-2A of Mesocricetus auratus (Golden hamster).